A 153-amino-acid polypeptide reads, in one-letter code: UPF0179 protein AF_2154 (153 aa).

It belongs to the UPF0179 family.

This Archaeoglobus fulgidus (strain ATCC 49558 / DSM 4304 / JCM 9628 / NBRC 100126 / VC-16) protein is UPF0179 protein AF_2154.